The chain runs to 173 residues: Photosystem I assembly protein Ycf3 (173 aa).

TPR repeat units lie at residues 35–68, 72–105, and 120–153; these read AYVYYRDGLSAQNDGDYAEALENYEESLKLEENA, GETLKNIAIIYMSNGEEERALETYQKALDENPKQ, and GRTAEEEGRRDDADGWFDQAANVWTQAVRLNPGG.

It belongs to the Ycf3 family.

It localises to the cellular thylakoid membrane. In terms of biological role, essential for the assembly of the photosystem I (PSI) complex. May act as a chaperone-like factor to guide the assembly of the PSI subunits. This Synechococcus sp. (strain CC9311) protein is Photosystem I assembly protein Ycf3.